Reading from the N-terminus, the 354-residue chain is 3-dehydroquinate synthase (354 aa).

NAD(+) contacts are provided by residues 66-71, 100-104, 124-125, Lys137, and Lys146; these read DGERYK, GVVGD, and TT. Zn(2+)-binding residues include Glu179, His242, and His259.

It belongs to the sugar phosphate cyclases superfamily. Dehydroquinate synthase family. It depends on Co(2+) as a cofactor. Zn(2+) is required as a cofactor. NAD(+) serves as cofactor.

It localises to the cytoplasm. It catalyses the reaction 7-phospho-2-dehydro-3-deoxy-D-arabino-heptonate = 3-dehydroquinate + phosphate. It functions in the pathway metabolic intermediate biosynthesis; chorismate biosynthesis; chorismate from D-erythrose 4-phosphate and phosphoenolpyruvate: step 2/7. Functionally, catalyzes the conversion of 3-deoxy-D-arabino-heptulosonate 7-phosphate (DAHP) to dehydroquinate (DHQ). The chain is 3-dehydroquinate synthase from Halorhodospira halophila (strain DSM 244 / SL1) (Ectothiorhodospira halophila (strain DSM 244 / SL1)).